We begin with the raw amino-acid sequence, 183 residues long: Negative modulator of initiation of replication (183 aa).

Residues 118-122 (RTRIY) are interaction with DNA.

This sequence belongs to the SeqA family. In terms of assembly, homodimer. Polymerizes to form helical filaments.

The protein resides in the cytoplasm. Negative regulator of replication initiation, which contributes to regulation of DNA replication and ensures that replication initiation occurs exactly once per chromosome per cell cycle. Binds to pairs of hemimethylated GATC sequences in the oriC region, thus preventing assembly of replication proteins and re-initiation at newly replicated origins. Repression is relieved when the region becomes fully methylated. This Proteus mirabilis (strain HI4320) protein is Negative modulator of initiation of replication.